The chain runs to 202 residues: Nuclear transcription factor Y subunit C-6 (202 aa).

Positions 1–16 (MAENNNNNGDNMNNDN) are enriched in low complexity. 2 disordered regions span residues 1–29 (MAEN…LPPM) and 180–202 (AWPA…GGGN). The span at 17 to 29 (HQQPPSYSQLPPM) shows a compositional bias: polar residues.

Belongs to the NFYC/HAP5 subunit family. Heterotrimeric transcription factor composed of three components, NF-YA, NF-YB and NF-YC. NF-YB and NF-YC must interact and dimerize for NF-YA association and DNA binding. Expressed in flowers and siliques.

It localises to the nucleus. Stimulates the transcription of various genes by recognizing and binding to a CCAAT motif in promoters. The protein is Nuclear transcription factor Y subunit C-6 (NFYC6) of Arabidopsis thaliana (Mouse-ear cress).